We begin with the raw amino-acid sequence, 306 residues long: Homoserine O-acetyltransferase (306 aa).

The Acyl-thioester intermediate role is filled by C142. Substrate contacts are provided by K163 and S192. The active-site Proton acceptor is H235. E237 is an active-site residue. R249 contributes to the substrate binding site.

Belongs to the MetA family.

Its subcellular location is the cytoplasm. The enzyme catalyses L-homoserine + acetyl-CoA = O-acetyl-L-homoserine + CoA. The protein operates within amino-acid biosynthesis; L-methionine biosynthesis via de novo pathway; O-acetyl-L-homoserine from L-homoserine: step 1/1. Its function is as follows. Transfers an acetyl group from acetyl-CoA to L-homoserine, forming acetyl-L-homoserine. The protein is Homoserine O-acetyltransferase of Brucella melitensis biotype 1 (strain ATCC 23456 / CCUG 17765 / NCTC 10094 / 16M).